The chain runs to 62 residues: uncharacterized protein (62 aa).

2 consecutive transmembrane segments (helical) span residues 7 to 27 (LLLL…VFIA) and 34 to 51 (IIAS…GFTL).

It localises to the cell membrane. This is an uncharacterized protein from Bacillus subtilis (strain 168).